The primary structure comprises 722 residues: Formin-like protein 16 (722 aa).

Disordered stretches follow at residues 1–56, 564–606, 635–672, and 690–722; these read MSPV…PMFD, ATED…PSRP, VGSP…HLSH, and PLLV…LRYQ. The span at 22 to 55 shows a compositional bias: pro residues; that stretch reads PLPPPPPPPMRRSAPSPPPMSGRVPPPPPPPPMF. Residues 182 to 571 enclose the FH2 domain; it reads FRCPVTKRSS…KAATEDVFGG (390 aa). 3 stretches are compositionally biased toward pro residues: residues 593 to 605, 638 to 658, and 709 to 722; these read IRPP…PPSR, PSPP…PPPM, and APPP…LRYQ.

This sequence belongs to the formin-like family. Class-II subfamily.

This is Formin-like protein 16 (FH16) from Arabidopsis thaliana (Mouse-ear cress).